The primary structure comprises 138 residues: MRTLWIMAVLLLGVEGSLIQFETLIMKVAKKSGMFSYSAYGCYCGWGGQGQPQDATDRCCFVHDCCYGKVTGCDPKMDIYTYSEENGDIVCGGDDPCRKAVCECDKAAAICFRDNKDTYDWKKYWRFPTKNCQESVPC.

A signal peptide spans 1–16 (MRTLWIMAVLLLGVEG). Intrachain disulfides connect Cys-42/Cys-132, Cys-44/Cys-60, Cys-59/Cys-111, Cys-65/Cys-138, Cys-66/Cys-104, Cys-73/Cys-97, and Cys-91/Cys-102. The Ca(2+) site is built by Tyr-43, Gly-45, and Gly-47. His-63 is a catalytic residue. Asp-64 contributes to the Ca(2+) binding site. Asp-105 is an active-site residue.

Requires Ca(2+) as cofactor. In terms of tissue distribution, expressed by the venom gland.

It localises to the secreted. It catalyses the reaction a 1,2-diacyl-sn-glycero-3-phosphocholine + H2O = a 1-acyl-sn-glycero-3-phosphocholine + a fatty acid + H(+). Its function is as follows. Snake venom phospholipase A2 (PLA2) that shows a moderate inhibition of ADP-induced human platelet aggregation when tested on platelet rich plasma. Exhibits high hydrolytic activities and prefers the anionic micelles (dPPC with deoxycholate) to the zwitterionic micelles (dPPC with Triton X-100). PLA2 catalyzes the calcium-dependent hydrolysis of the 2-acyl groups in 3-sn-phosphoglycerides. In Trimeresurus stejnegeri (Chinese green tree viper), this protein is Acidic phospholipase A2 Ts-A3.